Reading from the N-terminus, the 292-residue chain is NAD kinase (292 aa).

Asp73 serves as the catalytic Proton acceptor. Residues 73–74 (DG), 147–148 (NE), His158, Arg175, Asp177, 188–193 (TAYSLS), and Gln247 each bind NAD(+).

This sequence belongs to the NAD kinase family. Requires a divalent metal cation as cofactor.

Its subcellular location is the cytoplasm. It carries out the reaction NAD(+) + ATP = ADP + NADP(+) + H(+). Functionally, involved in the regulation of the intracellular balance of NAD and NADP, and is a key enzyme in the biosynthesis of NADP. Catalyzes specifically the phosphorylation on 2'-hydroxyl of the adenosine moiety of NAD to yield NADP. The chain is NAD kinase from Serratia proteamaculans (strain 568).